A 216-amino-acid chain; its full sequence is Somatotropin (216 aa).

The first 26 residues, 1–26 (MAADSQTPWLLTFSLLCLLWPQEAGA), serve as a signal peptide directing secretion. Position 45 (histidine 45) interacts with Zn(2+). A disulfide bridge links cysteine 78 with cysteine 189. Residue serine 131 is modified to Phosphoserine. Residue glutamate 198 participates in Zn(2+) binding. An intrachain disulfide couples cysteine 206 to cysteine 214.

Belongs to the somatotropin/prolactin family.

It is found in the secreted. Plays an important role in growth control. Its major role in stimulating body growth is to stimulate the liver and other tissues to secrete IGF1. It stimulates both the differentiation and proliferation of myoblasts. It also stimulates amino acid uptake and protein synthesis in muscle and other tissues. The chain is Somatotropin (Gh1) from Rattus norvegicus (Rat).